A 52-amino-acid chain; its full sequence is Rubredoxin (52 aa).

Residues 1–52 (MKKYVCTVCGYEYDPAEGDPDNGVKPGTSFDDLPADWVCPVCGAPKSEFEAA) enclose the Rubredoxin-like domain. Fe cation-binding residues include Cys6, Cys9, Cys39, and Cys42.

It belongs to the rubredoxin family. Requires Fe(3+) as cofactor.

Its subcellular location is the cytoplasm. Its function is as follows. Rubredoxin is a small nonheme, iron protein lacking acid-labile sulfide. Its single Fe, chelated to 4 Cys, functions as an electron acceptor and may also stabilize the conformation of the molecule. Functionally, electron acceptor for cytoplasmic lactate dehydrogenase. The protein is Rubredoxin (rub) of Nitratidesulfovibrio vulgaris (strain ATCC 29579 / DSM 644 / CCUG 34227 / NCIMB 8303 / VKM B-1760 / Hildenborough) (Desulfovibrio vulgaris).